The following is a 472-amino-acid chain: MISTGKAFIHENFMLQNKTAETLYHTYAKTLPIIDYHCHVPPQEIAENRQFNNISEIWLHGDHYKWRAMRAVGVEETFITGDGDDKEKFLKWAETVPYTMGNPLYHWTHLELKRYFGIDELLSSETAEAIWSATKEQLAAPERSVQGIIKESNVKVICTTDDPSDHLEAHQQIRKEGACQAAVYPAFRPDKALVASAPSFVPYLETLGAAAEVDISSLRSLLEALEKRATFFAEEGCVLSDHGLRTLPFVDTTEKEAEAAFQKALNQETLTPQEEEKYQTYVLLFLARLYNKLGWTMQFHLGALRNNNSRMVEQVGPDSGFDSMADDRFAESLNRFLNELERTNELPKTILYTLNPIFNEVIATTIGNFQGGGIPGKIQFGSGWWFNDTKDGMEKQMTDLANNGLLSLFVGMLTDSRSFLSYTRHEYFRRILCNRIGEWVERGEWPADEKWLGKVVEDISYYNAKRYFAFPK.

Belongs to the metallo-dependent hydrolases superfamily. Uronate isomerase family.

The catalysed reaction is D-glucuronate = D-fructuronate. The enzyme catalyses aldehydo-D-galacturonate = keto-D-tagaturonate. The protein operates within carbohydrate metabolism; pentose and glucuronate interconversion. The polypeptide is Uronate isomerase (Shouchella clausii (strain KSM-K16) (Alkalihalobacillus clausii)).